The following is a 308-amino-acid chain: Putative proline iminopeptidase (308 aa).

One can recognise an AB hydrolase-1 domain in the interval 30–290 (KPVLYIHGGP…LYVTNNAGHS (261 aa)). Ser105 acts as the Nucleophile in catalysis. Asp261 is an active-site residue. The active-site Proton donor is His289.

It belongs to the peptidase S33 family.

The protein localises to the cytoplasm. The catalysed reaction is Release of N-terminal proline from a peptide.. Specifically catalyzes the removal of N-terminal proline residues from peptides. This chain is Putative proline iminopeptidase (pip), found in Mycoplasma genitalium (strain ATCC 33530 / DSM 19775 / NCTC 10195 / G37) (Mycoplasmoides genitalium).